Here is a 129-residue protein sequence, read N- to C-terminus: Flagellar assembly factor FliW 2 (129 aa).

This sequence belongs to the FliW family. As to quaternary structure, interacts with translational regulator CsrA and flagellin(s).

The protein localises to the cytoplasm. Acts as an anti-CsrA protein, binds CsrA and prevents it from repressing translation of its target genes, one of which is flagellin. Binds to flagellin and participates in the assembly of the flagellum. This is Flagellar assembly factor FliW 2 from Helicobacter pylori (strain J99 / ATCC 700824) (Campylobacter pylori J99).